Here is a 110-residue protein sequence, read N- to C-terminus: UPF0060 membrane protein Haur_1798 (110 aa).

A run of 4 helical transmembrane segments spans residues 7–27, 33–53, 63–83, and 89–109; these read VVLF…VWQW, SIWF…LPTL, VYAA…WLID, and QPSL…LYWP.

Belongs to the UPF0060 family.

The protein localises to the cell membrane. The polypeptide is UPF0060 membrane protein Haur_1798 (Herpetosiphon aurantiacus (strain ATCC 23779 / DSM 785 / 114-95)).